The following is a 291-amino-acid chain: MEMO1 family protein PYRAB05390 (291 aa).

Belongs to the MEMO1 family.

The sequence is that of MEMO1 family protein PYRAB05390 from Pyrococcus abyssi (strain GE5 / Orsay).